The sequence spans 87 residues: Asparagine--tRNA ligase, cytoplasmic (87 aa).

It belongs to the class-II aminoacyl-tRNA synthetase family.

Its subcellular location is the cytoplasm. It carries out the reaction tRNA(Asn) + L-asparagine + ATP = L-asparaginyl-tRNA(Asn) + AMP + diphosphate + H(+). The protein is Asparagine--tRNA ligase, cytoplasmic (DED81) of Saccharomyces paradoxus (Yeast).